The chain runs to 1042 residues: Putative type I restriction enzyme MjaIXP endonuclease subunit (1042 aa).

One can recognise a Helicase ATP-binding domain in the interval 323–487 (GETPEDRRIG…FLVFGDYISA (165 aa)). The DEAH box motif lies at 439 to 442 (DEAH). The Helicase C-terminal domain occupies 551–731 (LTEDYLSKVS…DIKVVIEEMK (181 aa)).

This sequence belongs to the HsdR family. In terms of assembly, the type I restriction/modification system is composed of three polypeptides R, M and S.

It carries out the reaction Endonucleolytic cleavage of DNA to give random double-stranded fragments with terminal 5'-phosphates, ATP is simultaneously hydrolyzed.. The restriction (R) subunit of a type I restriction enzyme that recognizes 5'-CCAN(5)GTR-3' and cleaves a random distance away. The R subunit is required for both nuclease and ATPase activities, but not for modification. After locating a non-methylated recognition site, the enzyme complex serves as a molecular motor that translocates DNA in an ATP-dependent manner until a collision occurs that triggers cleavage. The protein is Putative type I restriction enzyme MjaIXP endonuclease subunit of Methanocaldococcus jannaschii (strain ATCC 43067 / DSM 2661 / JAL-1 / JCM 10045 / NBRC 100440) (Methanococcus jannaschii).